Consider the following 201-residue polypeptide: Diadenylate cyclase CdaS (201 aa).

Residues Gln54–Leu201 form the DAC domain.

Belongs to the adenylate cyclase family. DacB/CdaS subfamily. Probably forms a homohexamer. Mg(2+) serves as cofactor.

It carries out the reaction 2 ATP = 3',3'-c-di-AMP + 2 diphosphate. In terms of biological role, one of 3 paralogous diadenylate cyclases (DAC) in this bacteria catalyzing the condensation of 2 ATP molecules into cyclic di-AMP (c-di-AMP). It has slow DAC activity with ADP as a substrate and may have weak ADPase activity. Required for efficient spore formation, whereas in B.subtilis, it is required for efficient spore germination. It is produced under the control of different sigma factors in the two bacteria. It is also required for parasporal crystal formation. The sequence is that of Diadenylate cyclase CdaS from Bacillus thuringiensis (strain BMB171).